The sequence spans 669 residues: Bestrophin-3 (669 aa).

Residues 1–31 lie on the Cytoplasmic side of the membrane; sequence MTVTYSSKVANATFFGFHRLLLKWRGSIYKL. Ala10 contributes to the Ca(2+) binding site. Residues 32-51 form a helical membrane-spanning segment; that stretch reads LYREFIVFAVLYTAISLVYR. Over 52-60 the chain is Extracellular; it reads LLLTGAQKR. The chain crosses the membrane as a helical span at residues 61-82; the sequence is YFEKLSIYCDRYAEQIPVTFVL. The Cytoplasmic portion of the chain corresponds to 83 to 237; sequence GFYVTLVVNR…DWVGIPLVYT (155 aa). The chain crosses the membrane as a helical span at residues 238–255; it reads QVVTLAVYTFFFACLIGR. Over 256 to 274 the chain is Extracellular; the sequence is QFLDPTKGYVGHDLDLYVP. The helical transmembrane segment at 275–288 threads the bilayer; it reads IFTLLQFFFYAGWL. Topologically, residues 289-669 are cytoplasmic; that stretch reads KVAEQLINPF…GTPQRPRTWF (381 aa). Ca(2+) is bound by residues Gln293, Asn296, Asp301, and Asp304. Disordered regions lie at residues 399–496, 533–560, 591–627, and 646–669; these read LSTH…TKMP, QPSGTEQQVEPSGTPPGDPNPQTTSAST, TSLGNLGPDPVSPRDALLLPDTETPSETNGIHPGAGS, and ILEFNNEHTGESPKGTPQRPRTWF. Residues 440–451 show a composition bias toward basic residues; it reads NPHRGSPTRKQS. Residues 475–492 are compositionally biased toward low complexity; the sequence is RTSTLQSLSPQSSVRSSP. A compositionally biased stretch (polar residues) spans 533 to 543; that stretch reads QPSGTEQQVEP. A compositionally biased stretch (basic and acidic residues) spans 646–656; sequence ILEFNNEHTGE.

The protein belongs to the anion channel-forming bestrophin (TC 1.A.46) family. Calcium-sensitive chloride channel subfamily. Expressed in heart. In terms of tissue distribution, expressed in brain, retina/retinal pigment epithelium (RPE) and skeletal muscle. Expressed in acinar cells of parotid glands. Expressed in lung, kidney and testis.

It is found in the cell membrane. It catalyses the reaction chloride(in) = chloride(out). Functionally, ligand-gated anion channel that allows the movement of chloride monoatomic anions across cell membranes when activated by calcium (Ca2+). In terms of biological role, does not function as calcium-gated chloride channel. The chain is Bestrophin-3 (Best3) from Mus musculus (Mouse).